The following is a 53-amino-acid chain: UPF0391 membrane protein YPDSF_3201 (53 aa).

Helical transmembrane passes span 4–24 (WGII…GGLA) and 27–47 (AAWA…ISLF).

The protein belongs to the UPF0391 family.

Its subcellular location is the cell membrane. The protein is UPF0391 membrane protein YPDSF_3201 of Yersinia pestis (strain Pestoides F).